The primary structure comprises 344 residues: tRNA N6-adenosine threonylcarbamoyltransferase (344 aa).

Positions 114 and 118 each coordinate Fe cation. Substrate contacts are provided by residues 136–140 (LVSGG), Asp170, Gly183, Asp187, and Asn278. Asp306 lines the Fe cation pocket.

Belongs to the KAE1 / TsaD family. It depends on Fe(2+) as a cofactor.

Its subcellular location is the cytoplasm. The catalysed reaction is L-threonylcarbamoyladenylate + adenosine(37) in tRNA = N(6)-L-threonylcarbamoyladenosine(37) in tRNA + AMP + H(+). Its function is as follows. Required for the formation of a threonylcarbamoyl group on adenosine at position 37 (t(6)A37) in tRNAs that read codons beginning with adenine. Is involved in the transfer of the threonylcarbamoyl moiety of threonylcarbamoyl-AMP (TC-AMP) to the N6 group of A37, together with TsaE and TsaB. TsaD likely plays a direct catalytic role in this reaction. The polypeptide is tRNA N6-adenosine threonylcarbamoyltransferase (Mycobacteroides abscessus (strain ATCC 19977 / DSM 44196 / CCUG 20993 / CIP 104536 / JCM 13569 / NCTC 13031 / TMC 1543 / L948) (Mycobacterium abscessus)).